Here is a 200-residue protein sequence, read N- to C-terminus: NADH-quinone oxidoreductase subunit C (200 aa).

It belongs to the complex I 30 kDa subunit family. NDH-1 is composed of 14 different subunits. Subunits NuoB, C, D, E, F, and G constitute the peripheral sector of the complex.

It is found in the cell inner membrane. The enzyme catalyses a quinone + NADH + 5 H(+)(in) = a quinol + NAD(+) + 4 H(+)(out). Functionally, NDH-1 shuttles electrons from NADH, via FMN and iron-sulfur (Fe-S) centers, to quinones in the respiratory chain. The immediate electron acceptor for the enzyme in this species is believed to be ubiquinone. Couples the redox reaction to proton translocation (for every two electrons transferred, four hydrogen ions are translocated across the cytoplasmic membrane), and thus conserves the redox energy in a proton gradient. The protein is NADH-quinone oxidoreductase subunit C of Cereibacter sphaeroides (strain ATCC 17029 / ATH 2.4.9) (Rhodobacter sphaeroides).